The primary structure comprises 301 residues: Acetylglutamate kinase (301 aa).

Substrate is bound by residues 72–73 (GG), Arg-94, and Asn-199.

The protein belongs to the acetylglutamate kinase family. ArgB subfamily.

The protein resides in the cytoplasm. The catalysed reaction is N-acetyl-L-glutamate + ATP = N-acetyl-L-glutamyl 5-phosphate + ADP. It participates in amino-acid biosynthesis; L-arginine biosynthesis; N(2)-acetyl-L-ornithine from L-glutamate: step 2/4. Catalyzes the ATP-dependent phosphorylation of N-acetyl-L-glutamate. This is Acetylglutamate kinase from Bartonella henselae (strain ATCC 49882 / DSM 28221 / CCUG 30454 / Houston 1) (Rochalimaea henselae).